A 2663-amino-acid polypeptide reads, in one-letter code: Ankyrin repeat domain-containing protein 11 (2663 aa).

2 disordered regions span residues 1–90 (MPKG…KEPV) and 128–169 (SANS…ERGE). 2 stretches are compositionally biased toward basic and acidic residues: residues 21–54 (MVEKQTGKKDKDKVSLTKTPKLERGDGGKEVRER) and 69–90 (EQKDSDTEKQGPERKRIKKEPV). Residues 128–155 (SANSPVDTTPKHPSQSTVCQKGTPNSAS) are compositionally biased toward polar residues. A compositionally biased stretch (basic and acidic residues) spans 156 to 169 (KTKDKVNKRNERGE). 4 ANK repeats span residues 167 to 196 (RGETRLHRAAIRGDARRIKELISEGADVNV), 200 to 229 (AGWTALHEACNRGYYDVAKQLLAAGAEVNT), 233 to 262 (DDDTPLHDAANNGHYKVVKLLLRYGGNPQQ), and 266 to 292 (KGETPLKVANSPTMVNLLLGKGTYTSS). Phosphoserine is present on S276. Disordered regions lie at residues 289-380 (YTSS…SNSF), 398-647 (APKK…GQCS), and 723-783 (DTNK…NDLK). Residues 295–305 (SSTESSEEEDA) are compositionally biased toward acidic residues. Polar residues predominate over residues 309–320 (APSSSVDGNNTD). Basic and acidic residues predominate over residues 356-376 (DRVPPVDDKHLLKKDYRKETK). Position 408 is a phosphoserine (S408). T410 bears the Phosphothreonine mark. At S411 the chain carries Phosphoserine. Basic and acidic residues predominate over residues 438-451 (KTREPSNAKQQKEK). Residues 452–462 (NKVKKKRKKET) show a composition bias toward basic residues. Residues 463-477 (KGREVRFGKRSDKFC) show a composition bias toward basic and acidic residues. Residues 481 to 493 (SESESSESGEDDR) are compositionally biased toward acidic residues. The span at 513–531 (SLFSSLSASSTSSHGSSAA) shows a compositional bias: low complexity. A compositionally biased stretch (basic and acidic residues) spans 539–550 (TDQHTKHWRTDN). The segment covering 551–562 (WKTISSPAWSEV) has biased composition (polar residues). Residues 576–588 (ESDYSSEGSSVES) show a composition bias toward low complexity. 2 stretches are compositionally biased toward basic residues: residues 591–602 (PVRKRQEHRKRA) and 629–641 (VKKHKTKHKHKNK). Phosphoserine is present on S834. 4 stretches are compositionally biased toward basic and acidic residues: residues 881–928 (VKED…EKHK), 935–1043 (SEKD…KSIL), 1059–1090 (KKDTKEKHKDTHGKDKERKASLDQGKEKKEKA), and 1099–1112 (FSEKKDDKKGKEKS). 2 disordered regions span residues 881–1043 (VKED…KSIL) and 1059–1393 (KKDT…GQYE). Residue S1079 is modified to Phosphoserine. At T1120 the chain carries Phosphothreonine. S1123 bears the Phosphoserine mark. Basic and acidic residues-rich tracts occupy residues 1142–1301 (DLPR…DKIS), 1330–1347 (GDDKPRESACLPEKLKEK), and 1359–1393 (KSHDRERAKKEKAEKKEKGEDYKEGGSRKDSGQYE). T1419 bears the Phosphothreonine mark. Basic and acidic residues-rich tracts occupy residues 1424–1446 (STEKKDKNDSEREPSKKIEKELK), 1466–1545 (REKW…KGDP), 1556–1574 (APSKDPGKKDARPREKLLG), 1587–1597 (LSQKDLEIEER), and 1605–1639 (MKQMEKLRHRSGDPKLKEKAKPADDGRKKGLDIPA). Positions 1424-1710 (STEKKDKNDS…TGVPTPTSVL (287 aa)) are disordered. S1509 is subject to Phosphoserine. S1692 is modified (phosphoserine). Polar residues predominate over residues 1698-1710 (SRPTGVPTPTSVL). The residue at position 1792 (S1792) is a Phosphoserine. A disordered region spans residues 1814-1836 (SVPAASSYDSPMPPSMEDRAPLP). S1847 carries the post-translational modification Phosphoserine. A phosphotyrosine mark is found at Y1850 and Y1851. 3 positions are modified to phosphoserine: S1852, S1859, and S1990. 2 disordered regions span residues 1988–2019 (PESPKRFCPADPLHSAAPGPFSASEAPYPAPP) and 2131–2406 (LDLG…STQQ). 2 stretches are compositionally biased toward low complexity: residues 2310-2324 (IQPEAAEPKPTAEAP) and 2391-2406 (RSTQQLQQQLNTSTQQ). The tract at residues 2369 to 2663 (AKARGSEDDD…VNDDFVLLPA (295 aa)) is important for protein degradation.

As to quaternary structure, interacts with the PAS region of the p160 coactivators. Post-translationally, subject to proteasomal degradation which is probably essential to regulate its activity.

Its subcellular location is the nucleus. Chromatin regulator which modulates histone acetylation and gene expression in neural precursor cells. May recruit histone deacetylases (HDACs) to the p160 coactivators/nuclear receptor complex to inhibit ligand-dependent transactivation. Has a role in proliferation and development of cortical neural precursors. May also regulate bone homeostasis. The polypeptide is Ankyrin repeat domain-containing protein 11 (ANKRD11) (Homo sapiens (Human)).